Reading from the N-terminus, the 216-residue chain is Probable GTP-binding protein EngB (216 aa).

Positions E26 to P200 constitute an EngB-type G domain. Residues G34–S41, G61–L65, D79–G82, T146–D149, and Y179–S181 each bind GTP. Mg(2+) contacts are provided by S41 and T63.

Belongs to the TRAFAC class TrmE-Era-EngA-EngB-Septin-like GTPase superfamily. EngB GTPase family. It depends on Mg(2+) as a cofactor.

Functionally, necessary for normal cell division and for the maintenance of normal septation. The chain is Probable GTP-binding protein EngB from Vibrio vulnificus (strain CMCP6).